A 357-amino-acid chain; its full sequence is Sulfate/thiosulfate import ATP-binding protein CysA (357 aa).

The region spanning 3–237 (IQIQGVSKQY…PASPFVYDFL (235 aa)) is the ABC transporter domain. Residue 35–42 (GPSGSGKT) coordinates ATP.

This sequence belongs to the ABC transporter superfamily. Sulfate/tungstate importer (TC 3.A.1.6) family. In terms of assembly, the complex is composed of two ATP-binding proteins (CysA), two transmembrane proteins (CysT and CysW) and a solute-binding protein (CysP).

It localises to the cell membrane. It catalyses the reaction sulfate(out) + ATP + H2O = sulfate(in) + ADP + phosphate + H(+). It carries out the reaction thiosulfate(out) + ATP + H2O = thiosulfate(in) + ADP + phosphate + H(+). Its function is as follows. Part of the ABC transporter complex CysAWTP involved in sulfate/thiosulfate import. Responsible for energy coupling to the transport system. This Bacillus cereus (strain ATCC 14579 / DSM 31 / CCUG 7414 / JCM 2152 / NBRC 15305 / NCIMB 9373 / NCTC 2599 / NRRL B-3711) protein is Sulfate/thiosulfate import ATP-binding protein CysA.